An 851-amino-acid chain; its full sequence is Pentatricopeptide repeat-containing protein At3g54980, mitochondrial (851 aa).

The transit peptide at 1–26 directs the protein to the mitochondrion; sequence MRSLLVFRKIPSRIRLRNLRNNKPFC. PPR repeat units lie at residues 162–196, 197–231, 232–266, 267–301, 303–337, 338–372, 373–407, 408–438, 442–476, 477–511, 512–546, 547–577, 583–617, 618–652, 653–687, 688–722, 723–757, 758–792, and 793–827; these read NSRA…DVIP, FFPY…GVDG, DNVT…GAEP, DSLL…KLCV, SQET…GISM, NVVA…GPSP, NSVT…GLTP, SVFH…SFET, NVFV…GIGP, NVVS…GLKP, NNYT…NIEV, NGVV…MIEE, SCMS…GISP, NVIT…GVKL, DIPA…GLNP, SQPI…GLRC, DLGT…GLVP, DEII…NVTP, and NVLI…GILP.

The protein belongs to the PPR family. P subfamily.

It localises to the mitochondrion. In Arabidopsis thaliana (Mouse-ear cress), this protein is Pentatricopeptide repeat-containing protein At3g54980, mitochondrial.